The chain runs to 381 residues: CCN family member 1 (381 aa).

The N-terminal stretch at 1-24 is a signal peptide; that stretch reads MSSRIARALALVVTLLHLTRLALS. In terms of domain architecture, IGFBP N-terminal spans 25–94; sequence TCPAACHCPL…TALKGICRAQ (70 aa). 6 disulfides stabilise this stretch: C26-C50, C30-C52, C32-C53, C39-C56, C64-C78, and C70-C91. Positions 98 to 164 constitute a VWFC domain; it reads RPCEYNSRIY…GQCCEEWVCD (67 aa). A Phosphoserine modification is found at S188. In terms of domain architecture, TSP type-1 spans 228–273; it reads KCIVQTTSWSQCSKTCGTGISTRVTNDNPECRLVKETRICEVRPCG. Positions 279–315 are heparin-binding; that stretch reads SLKKGKKCSKTKKSPEPVRFTYAGCLSVKKYRPKYCG. 5 disulfides stabilise this stretch: C286/C323, C303/C337, C314/C353, C317/C355, and C322/C359. The CTCK domain occupies 286–360; sequence CSKTKKSPEP…QSCKCNYNCP (75 aa).

Belongs to the CCN family. Interaction with integrins is heparin- and cell-type-dependent and promotes cell adhesion.

The protein localises to the secreted. Functionally, promotes cell proliferation, chemotaxis, angiogenesis and cell adhesion. Appears to play a role in wound healing by up-regulating, in skin fibroblasts, the expression of a number of genes involved in angiogenesis, inflammation and matrix remodeling including VEGA-A, VEGA-C, MMP1, MMP3, TIMP1, uPA, PAI-1 and integrins alpha-3 and alpha-5. CCN1-mediated gene regulation is dependent on heparin-binding. Down-regulates the expression of alpha-1 and alpha-2 subunits of collagen type-1. Promotes cell adhesion and adhesive signaling through integrin alpha-6/beta-1, cell migration through integrin alpha-1/beta-5 and cell proliferation through integrin alpha-v/beta-3. This Pan troglodytes (Chimpanzee) protein is CCN family member 1 (CCN1).